Consider the following 428-residue polypeptide: Elongation factor 1-alpha (428 aa).

The tr-type G domain maps to 5–225 (KPILNVAFIG…DGFQPPEKPT (221 aa)). Positions 14-21 (GHVDAGKS) are G1. Residue 14-21 (GHVDAGKS) participates in GTP binding. Position 21 (S21) interacts with Mg(2+). Residues 70 to 74 (GVTID) are G2. Positions 91-94 (DCPG) are G3. Residues 91-95 (DCPGH) and 149-152 (NKMD) each bind GTP. Positions 149-152 (NKMD) are G4. The tract at residues 189 to 191 (ASL) is G5.

Belongs to the TRAFAC class translation factor GTPase superfamily. Classic translation factor GTPase family. EF-Tu/EF-1A subfamily.

The protein localises to the cytoplasm. It catalyses the reaction GTP + H2O = GDP + phosphate + H(+). Its function is as follows. GTP hydrolase that promotes the GTP-dependent binding of aminoacyl-tRNA to the A-site of ribosomes during protein biosynthesis. The chain is Elongation factor 1-alpha from Methanococcus vannielii (strain ATCC 35089 / DSM 1224 / JCM 13029 / OCM 148 / SB).